We begin with the raw amino-acid sequence, 701 residues long: Glycine--tRNA ligase beta subunit (701 aa).

The protein belongs to the class-II aminoacyl-tRNA synthetase family. In terms of assembly, tetramer of two alpha and two beta subunits.

The protein resides in the cytoplasm. The catalysed reaction is tRNA(Gly) + glycine + ATP = glycyl-tRNA(Gly) + AMP + diphosphate. The protein is Glycine--tRNA ligase beta subunit of Anaeromyxobacter dehalogenans (strain 2CP-C).